The sequence spans 159 residues: Cytochrome c-type biogenesis protein CcmE (159 aa).

Over M1 to R23 the chain is Cytoplasmic. Residues L24 to A44 form a helical; Signal-anchor for type II membrane protein membrane-spanning segment. The Periplasmic segment spans residues L45–K159. Heme is bound by residues H138 and Y142.

It belongs to the CcmE/CycJ family.

The protein resides in the cell inner membrane. Functionally, heme chaperone required for the biogenesis of c-type cytochromes. Transiently binds heme delivered by CcmC and transfers the heme to apo-cytochromes in a process facilitated by CcmF and CcmH. The chain is Cytochrome c-type biogenesis protein CcmE from Bartonella henselae (strain ATCC 49882 / DSM 28221 / CCUG 30454 / Houston 1) (Rochalimaea henselae).